The sequence spans 4083 residues: Dynein heavy chain, cytoplasmic (4083 aa).

The tract at residues M1–C1745 is stem. Coiled coils occupy residues D127–V166, I381–R402, and K801–A821. 4 AAA regions span residues Y1746–N1967, S2026–D2265, S2373–G2622, and T2716–Q2980. ATP-binding positions include G1784–T1791, G2064–T2071, G2412–T2419, and G2754–T2761. The interval L2987–T3294 is stalk. 3 coiled-coil regions span residues L3015–R3085, L3223–K3302, and L3527–L3607. AAA regions lie at residues M3364–K3592 and L3748–H3952.

Belongs to the dynein heavy chain family. Consists of at least two heavy chains and a number of intermediate and light chains.

The protein resides in the cytoplasm. Its subcellular location is the cytoskeleton. In terms of biological role, cytoplasmic dynein acts as a motor for the intracellular retrograde motility of vesicles and organelles along microtubules. Dynein has ATPase activity; the force-producing power stroke is thought to occur on release of ADP. Required to maintain uniform nuclear distribution in hyphae. May play an important role in the proper orientation of the mitotic spindle into the budding daughter cell yeast. Probably required for normal progression of the cell cycle. This chain is Dynein heavy chain, cytoplasmic (DYN1), found in Eremothecium gossypii (strain ATCC 10895 / CBS 109.51 / FGSC 9923 / NRRL Y-1056) (Yeast).